An 81-amino-acid polypeptide reads, in one-letter code: Small cysteine-rich protein 4 (81 aa).

An N-terminal signal peptide occupies residues 1–23; the sequence is MDTKVACLLLIILGALTVQGAVS. Residues 24-25 constitute a propeptide that is removed on maturation; sequence GN.

Belongs to the Cnidaria small cysteine-rich protein (SCRiP) family. beta subfamily. Post-translationally, contains 4 disulfide bonds.

The protein localises to the secreted. Its subcellular location is the nematocyst. In terms of biological role, induces neurotoxic symptoms on zebrafish. Has also been claimed to be implied in calcification, but tests on homolog proteins suggest that proteins of this family have a neurotoxic function and not a calcification function. This Orbicella faveolata (Mountainous star coral) protein is Small cysteine-rich protein 4.